Here is a 66-residue protein sequence, read N- to C-terminus: U1-theraphotoxin-Cg1d 1 (66 aa).

The signal sequence occupies residues 1 to 21 (MKMSALFVIFGLALLFCNSFA). Residues 22–29 (AELKATGR) constitute a propeptide that is removed on maturation. Disulfide bonds link C31-C46, C38-C51, and C45-C58. P63 carries the post-translational modification Proline amide.

This sequence belongs to the neurotoxin 10 (Hwtx-1) family. 46 (Jztx-7/10/12) subfamily. As to expression, expressed by the venom gland.

It is found in the secreted. In terms of biological role, probable ion channel inhibitor. In Chilobrachys guangxiensis (Chinese earth tiger tarantula), this protein is U1-theraphotoxin-Cg1d 1.